The following is a 261-amino-acid chain: Gap junction beta-6 protein (261 aa).

At 1–22 (MDWGTLHTVIGGVNKHSTSIGK) the chain is on the cytoplasmic side. The helical transmembrane segment at 23–45 (VWITVIFIFRVMILVVAAQEVWG) threads the bilayer. The Extracellular portion of the chain corresponds to 46-75 (DEQEDFVCNTLQPGCKNVCYDHFFPVSHIR). A helical transmembrane segment spans residues 76-98 (LWALQLIFVSTPALLVAMHVAYY). At 99-131 (RHETARKFIRGEKRNEFKDLEDIKRQKVRIEGS) the chain is on the cytoplasmic side. A helical transmembrane segment spans residues 132 to 154 (LWWTYTSSIFFRIIFEAAFMYVF). At 155–192 (YFLYNGYHLPWVLKCGIDPCPNLVDCFISRPTEKTVFT) the chain is on the extracellular side. Residues 193–215 (VFMISASVICMLLNVAELCYLLL) traverse the membrane as a helical segment. Residues 216 to 261 (KLCFRRSKRTQAQRNHPNHALKESKQNEMNELISDSGQNAITSFPS) lie on the Cytoplasmic side of the membrane.

The protein belongs to the connexin family. Beta-type (group I) subfamily. As to quaternary structure, a connexon is composed of a hexamer of connexins. Interacts with CNST. As to expression, highly expressed in adult brain and skin. Less in uterus, lung and eye. Very low in testis and sciatic nerve. No expression before birth.

It localises to the cell membrane. The protein resides in the cell junction. Its subcellular location is the gap junction. Functionally, one gap junction consists of a cluster of closely packed pairs of transmembrane channels, the connexons, through which materials of low MW diffuse from one cell to a neighboring cell. This Mus musculus (Mouse) protein is Gap junction beta-6 protein (Gjb6).